Consider the following 142-residue polypeptide: Group IIE secretory phospholipase A2 (142 aa).

Positions Met1 to Gly19 are cleaved as a signal peptide. Residues Asp41, Gly43, Tyr45, Gly47, and Gly49 each coordinate Ca(2+). Intrachain disulfides connect Cys44–Cys135, Cys46–Cys62, Cys61–Cys115, Cys67–Cys142, Cys68–Cys108, Cys77–Cys101, and Cys95–Cys106. His65 is a catalytic residue. Residue Asp66 participates in Ca(2+) binding. Asp109 is a catalytic residue. Positions 130 and 132 each coordinate Ca(2+).

The protein belongs to the phospholipase A2 family. Requires Ca(2+) as cofactor. In terms of tissue distribution, highly expressed in skin and uterus, and at lower levels in various other tissues. Expressed in hair follicles, specifically localized in companion cells of the outer root sheath and cuticular cells of the inner root sheath in hair follicles during anagen. Expressed in white and brown adipose tissue.

The protein localises to the secreted. It is found in the cytoplasm. It carries out the reaction a 1,2-diacyl-sn-glycero-3-phosphoethanolamine + H2O = a 1-acyl-sn-glycero-3-phosphoethanolamine + a fatty acid + H(+). It catalyses the reaction 1-hexadecanoyl-2-(9Z-octadecenoyl)-sn-glycero-3-phosphoethanolamine + H2O = 1-hexadecanoyl-sn-glycero-3-phosphoethanolamine + (9Z)-octadecenoate + H(+). The enzyme catalyses 1-hexadecanoyl-2-(9Z,12Z-octadecadienoyl)-sn-glycero-3-phosphoethanolamine + H2O = 1-hexadecanoyl-sn-glycero-3-phosphoethanolamine + (9Z,12Z)-octadecadienoate + H(+). The catalysed reaction is 1-hexadecanoyl-2-(5Z,8Z,11Z,14Z-eicosatetraenoyl)-sn-glycero-3-phosphoethanolamine + H2O = 1-hexadecanoyl-sn-glycero-3-phosphoethanolamine + (5Z,8Z,11Z,14Z)-eicosatetraenoate + H(+). It carries out the reaction 1,2-dihexadecanoyl-sn-glycero-3-phospho-(1'-sn-glycerol) + H2O = 1-hexadecanoyl-sn-glycero-3-phospho-(1'-sn-glycerol) + hexadecanoate + H(+). It catalyses the reaction 1-hexadecanoyl-2-(9Z-octadecenoyl)-sn-glycero-3-phosphoglycerol + H2O = 1-hexadecanoyl-sn-glycero-3-phosphoglycerol + (9Z)-octadecenoate + H(+). The enzyme catalyses a 1,2-diacyl-sn-glycero-3-phosphocholine + H2O = a 1-acyl-sn-glycero-3-phosphocholine + a fatty acid + H(+). The catalysed reaction is 1,2-dihexadecanoyl-sn-glycero-3-phosphocholine + H2O = 1-hexadecanoyl-sn-glycero-3-phosphocholine + hexadecanoate + H(+). It carries out the reaction 1-hexadecanoyl-2-(9Z-octadecenoyl)-sn-glycero-3-phosphocholine + H2O = 1-hexadecanoyl-sn-glycero-3-phosphocholine + (9Z)-octadecenoate + H(+). It catalyses the reaction 1-hexadecanoyl-2-(9Z,12Z-octadecadienoyl)-sn-glycero-3-phosphocholine + H2O = (9Z,12Z)-octadecadienoate + 1-hexadecanoyl-sn-glycero-3-phosphocholine + H(+). The enzyme catalyses 1-hexadecanoyl-2-(4Z,7Z,10Z,13Z,16Z,19Z-docosahexaenoyl)-sn-glycero-3-phosphocholine + H2O = (4Z,7Z,10Z,13Z,16Z,19Z)-docosahexaenoate + 1-hexadecanoyl-sn-glycero-3-phosphocholine + H(+). Its function is as follows. Secretory calcium-dependent phospholipase A2 that primarily targets extracellular phospholipids. Hydrolyzes the ester bond of the fatty acyl group attached at sn-2 position of phospholipids (phospholipase A2 activity), releasing various unsaturated fatty acids including oleoate, linoleoate, arachidonate, docosahexaenoate and lysophosphatidylethanolamines in preference to lysophosphatidylcholines. In response to high-fat diet, hydrolyzes minor lipoprotein phospholipids including phosphatidylserines, phosphatidylinositols and phosphatidylglycerols, altering lipoprotein composition and fat storage in adipose tissue and liver. May act in an autocrine and paracrine manner. Contributes to lipid remodeling of cellular membranes and generation of lipid mediators involved in pathogen clearance. Cleaves sn-2 fatty acyl chains of phosphatidylglycerols and phosphatidylethanolamines, which are major components of membrane phospholipids in bacteria. Acts as a hair follicle phospholipase A2. Selectively releases lysophosphatidylethanolamines (LPE) and various unsaturated fatty acids in skin to regulate hair follicle homeostasis. May regulate the inflammatory response by releasing arachidonate, a precursor of prostaglandins and leukotrienes. Upon allergen exposure, may participate in allergic inflammatory response by enhancing leukotriene C4 synthesis and degranulation in mast cells. The chain is Group IIE secretory phospholipase A2 (Pla2g2e) from Mus musculus (Mouse).